We begin with the raw amino-acid sequence, 115 residues long: MAGMVLGVGAGVFLLALLWVLVLLLCVLLCRASGIARFSIIFVFLGALIITTVLLLFPRASEFPAPQGEMKIVDAFFIGRYVLLAFLSAVFLGGLFLLLTHHVLEPIYAKPLRSC.

3 helical membrane passes run Val5–Leu25, Phe38–Pro58, and Tyr81–His101.

This sequence belongs to the TMEM218 family. As to quaternary structure, interacts with TMEM67.

It is found in the membrane. The protein resides in the cell projection. Its subcellular location is the cilium. Functionally, may be involved in ciliary biogenesis or function. In Rattus norvegicus (Rat), this protein is Transmembrane protein 218 (Tmem218).